A 590-amino-acid polypeptide reads, in one-letter code: Phosphomethylpyrimidine synthase (590 aa).

Substrate is bound by residues N197, M226, Y255, H291, 311–313, 352–355, and E391; these read SRG and DGLR. H395 serves as a coordination point for Zn(2+). Y418 contacts substrate. H459 provides a ligand contact to Zn(2+). C539, C542, and C547 together coordinate [4Fe-4S] cluster.

This sequence belongs to the ThiC family. [4Fe-4S] cluster serves as cofactor.

It carries out the reaction 5-amino-1-(5-phospho-beta-D-ribosyl)imidazole + S-adenosyl-L-methionine = 4-amino-2-methyl-5-(phosphooxymethyl)pyrimidine + CO + 5'-deoxyadenosine + formate + L-methionine + 3 H(+). It functions in the pathway cofactor biosynthesis; thiamine diphosphate biosynthesis. Functionally, catalyzes the synthesis of the hydroxymethylpyrimidine phosphate (HMP-P) moiety of thiamine from aminoimidazole ribotide (AIR) in a radical S-adenosyl-L-methionine (SAM)-dependent reaction. This is Phosphomethylpyrimidine synthase from Bacillus subtilis (strain 168).